We begin with the raw amino-acid sequence, 101 residues long: MNLERVSNEEKLNLCRKYYLGGFAFLPFLWLVNIFWFFREAFIVPAYTEQSQIKGYVWRSAVGFFLWVIVLSTWITIFQIYRPRWGALGDYLSFTIPLGTP.

Residues 1 to 17 lie on the Cytoplasmic side of the membrane; the sequence is MNLERVSNEEKLNLCRK. The helical intramembrane region spans 18–36; sequence YYLGGFAFLPFLWLVNIFW. Residues 37–57 lie on the Cytoplasmic side of the membrane; that stretch reads FFREAFIVPAYTEQSQIKGYV. The helical transmembrane segment at 58–78 threads the bilayer; the sequence is WRSAVGFFLWVIVLSTWITIF. At 79-101 the chain is on the lumenal side; it reads QIYRPRWGALGDYLSFTIPLGTP.

It belongs to the PEN-2 family. In terms of assembly, the functional gamma-secretase complex is composed of at least four polypeptides: a presenilin homodimer (PSEN1 or PSEN2), nicastrin (NCSTN), APH1 (APH1A or APH1B) and PSENEN.

It localises to the endoplasmic reticulum membrane. It is found in the golgi apparatus. Its subcellular location is the golgi stack membrane. The protein localises to the cell membrane. The protein resides in the membrane. Essential subunit of the gamma-secretase complex, an endoprotease complex that catalyzes the intramembrane cleavage of integral membrane proteins such as Notch receptors and APP (amyloid-beta precursor protein). The gamma-secretase complex plays a role in Notch and Wnt signaling cascades and regulation of downstream processes via its role in processing key regulatory proteins, and by regulating cytosolic CTNNB1 levels. PSENEN modulates both endoproteolysis of presenilin and gamma-secretase activity. The chain is Gamma-secretase subunit PEN-2 (PSENEN) from Bos taurus (Bovine).